The chain runs to 164 residues: Large ribosomal subunit protein uL10 (164 aa).

This sequence belongs to the universal ribosomal protein uL10 family. As to quaternary structure, part of the ribosomal stalk of the 50S ribosomal subunit. The N-terminus interacts with L11 and the large rRNA to form the base of the stalk. The C-terminus forms an elongated spine to which L12 dimers bind in a sequential fashion forming a multimeric L10(L12)X complex.

Forms part of the ribosomal stalk, playing a central role in the interaction of the ribosome with GTP-bound translation factors. The sequence is that of Large ribosomal subunit protein uL10 from Chromobacterium violaceum (strain ATCC 12472 / DSM 30191 / JCM 1249 / CCUG 213 / NBRC 12614 / NCIMB 9131 / NCTC 9757 / MK).